We begin with the raw amino-acid sequence, 184 residues long: Large ribosomal subunit protein uL5 (184 aa).

It belongs to the universal ribosomal protein uL5 family. As to quaternary structure, part of the 50S ribosomal subunit; part of the 5S rRNA/L5/L18/L25 subcomplex. Contacts the 5S rRNA and the P site tRNA. Forms a bridge to the 30S subunit in the 70S ribosome.

In terms of biological role, this is one of the proteins that bind and probably mediate the attachment of the 5S RNA into the large ribosomal subunit, where it forms part of the central protuberance. In the 70S ribosome it contacts protein S13 of the 30S subunit (bridge B1b), connecting the 2 subunits; this bridge is implicated in subunit movement. Contacts the P site tRNA; the 5S rRNA and some of its associated proteins might help stabilize positioning of ribosome-bound tRNAs. The polypeptide is Large ribosomal subunit protein uL5 (Agrobacterium fabrum (strain C58 / ATCC 33970) (Agrobacterium tumefaciens (strain C58))).